Consider the following 56-residue polypeptide: Sperm protamine P1 (56 aa).

Positions 1 to 56 (RLSRRRVYSIGGRRRRRRRRSRGRRGRRRGRRRGRRRGRRRGRRRRRRRGGRRRRR) are disordered.

In terms of processing, P2 is phosphorylated in immature sperm. It is dephosphorylated in mature sperm allowing a stronger interaction with DNA. As to expression, testis.

The protein resides in the nucleus. The protein localises to the chromosome. Functionally, protamines substitute for histones in the chromatin of sperm during the haploid phase of spermatogenesis. They compact sperm DNA into a highly condensed, stable and inactive complex. Its function is as follows. Octopus spermiogenesis is characterized by a double nuclear protein transition: Histones are first replaced by P1, which allows the chromatin to adopt a shape that is not as relaxed as with histones. The majority of P1 is later replaced by P2, forming a compact chromatin. P2 is the main protamine of sperm. This is Sperm protamine P1 from Octopus vulgaris (Common octopus).